The following is a 327-amino-acid chain: DNA-directed RNA polymerase subunit alpha (327 aa).

The alpha N-terminal domain (alpha-NTD) stretch occupies residues 1-233 (MQNSASEFLK…DQLSIFADLQ (233 aa)). The interval 247-327 (IDPILLRPVD…NWPPAGLEKP (81 aa)) is alpha C-terminal domain (alpha-CTD).

This sequence belongs to the RNA polymerase alpha chain family. Homodimer. The RNAP catalytic core consists of 2 alpha, 1 beta, 1 beta' and 1 omega subunit. When a sigma factor is associated with the core the holoenzyme is formed, which can initiate transcription.

It carries out the reaction RNA(n) + a ribonucleoside 5'-triphosphate = RNA(n+1) + diphosphate. Functionally, DNA-dependent RNA polymerase catalyzes the transcription of DNA into RNA using the four ribonucleoside triphosphates as substrates. This chain is DNA-directed RNA polymerase subunit alpha, found in Chromobacterium violaceum (strain ATCC 12472 / DSM 30191 / JCM 1249 / CCUG 213 / NBRC 12614 / NCIMB 9131 / NCTC 9757 / MK).